The following is a 330-amino-acid chain: Beta-ketoacyl-[acyl-carrier-protein] synthase III (330 aa).

Catalysis depends on residues Cys-114 and His-257. The interval 258–262 is ACP-binding; it reads QANLR. The active site involves Asn-287.

The protein belongs to the thiolase-like superfamily. FabH family. Homodimer.

Its subcellular location is the cytoplasm. The enzyme catalyses malonyl-[ACP] + acetyl-CoA + H(+) = 3-oxobutanoyl-[ACP] + CO2 + CoA. It functions in the pathway lipid metabolism; fatty acid biosynthesis. Catalyzes the condensation reaction of fatty acid synthesis by the addition to an acyl acceptor of two carbons from malonyl-ACP. Catalyzes the first condensation reaction which initiates fatty acid synthesis and may therefore play a role in governing the total rate of fatty acid production. Possesses both acetoacetyl-ACP synthase and acetyl transacylase activities. Its substrate specificity determines the biosynthesis of branched-chain and/or straight-chain of fatty acids. In Oleidesulfovibrio alaskensis (strain ATCC BAA-1058 / DSM 17464 / G20) (Desulfovibrio alaskensis), this protein is Beta-ketoacyl-[acyl-carrier-protein] synthase III.